A 786-amino-acid chain; its full sequence is Zinc finger transcription factor YRM1 (786 aa).

The segment at 1–25 (MSKRGSLQDRASPSEETVKKAQKRR) is disordered. The segment at residues 31–59 (CAFCRKRKLRCDQQKPMCSTCKTRGRSGC) is a DNA-binding region (zn(2)-C6 fungal-type). Positions 721-747 (PLAGNSPGLPPEEVRNNSENASHNNET) are disordered. A compositionally biased stretch (polar residues) spans 737-747 (NSENASHNNET).

It is found in the cytoplasm. Its subcellular location is the nucleus. Functionally, transcription factor involved in the regulation of multidrug resistance genes. Acts in concert with YRR1. In Saccharomyces cerevisiae (strain ATCC 204508 / S288c) (Baker's yeast), this protein is Zinc finger transcription factor YRM1 (YRM1).